Here is a 219-residue protein sequence, read N- to C-terminus: Small ribosomal subunit protein uS19 (219 aa).

The segment at 1–128 is unknown; that stretch reads MGFKGAWNKR…YEEIYAQYKQ (128 aa). Residues 129–219 form a small ribosomal subunit protein uS19 region; it reads MTEKKAYVDP…DKTAKVVKKK (91 aa).

It belongs to the universal ribosomal protein uS19 family.

Protein S19 forms a complex with S13 that binds strongly to the 16S ribosomal RNA. The chain is Small ribosomal subunit protein uS19 from Aquifex pyrophilus.